Consider the following 455-residue polypeptide: ATP-dependent protease ATPase subunit HslU (455 aa).

ATP-binding positions include Val23, 65 to 70 (GVGKTE), Asp266, Glu333, and Arg405.

The protein belongs to the ClpX chaperone family. HslU subfamily. As to quaternary structure, a double ring-shaped homohexamer of HslV is capped on each side by a ring-shaped HslU homohexamer. The assembly of the HslU/HslV complex is dependent on binding of ATP.

Its subcellular location is the cytoplasm. Its function is as follows. ATPase subunit of a proteasome-like degradation complex; this subunit has chaperone activity. The binding of ATP and its subsequent hydrolysis by HslU are essential for unfolding of protein substrates subsequently hydrolyzed by HslV. HslU recognizes the N-terminal part of its protein substrates and unfolds these before they are guided to HslV for hydrolysis. The polypeptide is ATP-dependent protease ATPase subunit HslU (Xanthomonas axonopodis pv. citri (strain 306)).